The following is a 108-amino-acid chain: MMKGGMGNLMKQAQQMQAKMAKAQEELAQMEVVGEAGAGMVKVTMTGSHSVRKVELDDSLMEDDKDMIEDLLAAAVNDAVRRVEEQNKDKMGALTGGMQLPPGMKMPF.

A disordered region spans residues 87-108; the sequence is NKDKMGALTGGMQLPPGMKMPF.

Belongs to the YbaB/EbfC family. As to quaternary structure, homodimer.

Its subcellular location is the cytoplasm. The protein localises to the nucleoid. Its function is as follows. Binds to DNA and alters its conformation. May be involved in regulation of gene expression, nucleoid organization and DNA protection. This chain is Nucleoid-associated protein CPS_3743, found in Colwellia psychrerythraea (strain 34H / ATCC BAA-681) (Vibrio psychroerythus).